A 149-amino-acid chain; its full sequence is Large ribosomal subunit protein bL9 (149 aa).

This sequence belongs to the bacterial ribosomal protein bL9 family.

In terms of biological role, binds to the 23S rRNA. In Magnetococcus marinus (strain ATCC BAA-1437 / JCM 17883 / MC-1), this protein is Large ribosomal subunit protein bL9.